The sequence spans 452 residues: Tripartite motif-containing protein 49 (452 aa).

Residues Cys15–Thr56 form an RING-type zinc finger. A B box-type zinc finger spans residues Ser88–Ile129. Zn(2+)-binding residues include Cys93, His96, Cys115, and His121. The B30.2/SPRY domain occupies Glu269–Phe452.

This sequence belongs to the TRIM/RBCC family. Preferentially expressed in testis.

The protein is Tripartite motif-containing protein 49 (TRIM49) of Homo sapiens (Human).